A 1226-amino-acid chain; its full sequence is 3-hydroxy-3-methylglutaryl-coenzyme A reductase (1226 aa).

5 helical membrane passes run 17–37 (IETI…ILSG), 224–244 (ILVV…LFLA), 252–272 (FWLS…TLPM), 337–357 (VGNM…VGVN), and 373–393 (LLAM…TIMV). The SSD domain occupies 223-391 (DILVVLTGYI…FTLYTAVLTI (169 aa)). The interval 428-449 (LSRKSSKQSVTEPETTKNLRQR) is disordered. A compositionally biased stretch (polar residues) spans 434 to 445 (KQSVTEPETTKN). The helical transmembrane segment at 481 to 501 (LLLIASFLTLHILNFCTTLTS) threads the bilayer. Disordered regions lie at residues 683 to 702 (APAP…PPPL) and 722 to 742 (LPIR…EVEP). The segment covering 685–702 (APAPAPEPEPPVNRPPPL) has biased composition (pro residues). The active-site Charge relay system is glutamate 869. 875 to 881 (STSRGCK) contacts CoA. Residues 936–938 (SRF) and 963–971 (DAMGMNMIS) each bind NADP(+). Catalysis depends on lysine 1001, which acts as the Charge relay system. 1030–1032 (VLK) serves as a coordination point for CoA. Residue aspartate 1077 is the Charge relay system of the active site. A helical transmembrane segment spans residues 1150 to 1170 (IIASAVMAGELSLISALAAGH). 1174–1175 (AH) is a CoA binding site. Histidine 1175 acts as the Proton donor in catalysis. 1179 to 1180 (NR) contacts NADP(+). Residues 1182-1226 (QLNTPMPSRPHTPGPEDVSHVQQLPTPSASDDKGVTAQGYVVEAK) are disordered. The segment covering 1201-1210 (HVQQLPTPSA) has biased composition (polar residues).

The protein belongs to the HMG-CoA reductase family.

The protein resides in the endoplasmic reticulum membrane. The enzyme catalyses (R)-mevalonate + 2 NADP(+) + CoA = (3S)-3-hydroxy-3-methylglutaryl-CoA + 2 NADPH + 2 H(+). It functions in the pathway metabolic intermediate biosynthesis; (R)-mevalonate biosynthesis; (R)-mevalonate from acetyl-CoA: step 3/3. Its function is as follows. HMG-CoA reductase; part of the first module of ergosterol biosynthesis pathway that includes the early steps of the pathway, conserved across all eukaryotes, and which results in the formation of mevalonate from acetyl-coenzyme A (acetyl-CoA). This module also plays a key role in the biosynthesis of triterpenes such as ganoderic acids (GA), a group of highly oxygenated lanostane-type triterpenoids which are well recognized as a main group of unique bioactive compounds in the medicinal mushroom Ganoderma lucidum. In this module, the acetyl-CoA acetyltransferase catalyzes the formation of acetoacetyl-CoA. The hydroxymethylglutaryl-CoA synthase HMGS then condenses acetyl-CoA with acetoacetyl-CoA to form HMG-CoA. The rate-limiting step of the early module is the reduction to mevalonate by the 3-hydroxy-3-methylglutaryl-coenzyme A (HMG-CoA) reductase. The sequence is that of 3-hydroxy-3-methylglutaryl-coenzyme A reductase from Ganoderma lucidum (Ling zhi medicinal fungus).